We begin with the raw amino-acid sequence, 217 residues long: Probable transaldolase (217 aa).

The active-site Schiff-base intermediate with substrate is Lys-83.

Belongs to the transaldolase family. Type 3B subfamily.

It is found in the cytoplasm. The catalysed reaction is D-sedoheptulose 7-phosphate + D-glyceraldehyde 3-phosphate = D-erythrose 4-phosphate + beta-D-fructose 6-phosphate. It participates in carbohydrate degradation; pentose phosphate pathway; D-glyceraldehyde 3-phosphate and beta-D-fructose 6-phosphate from D-ribose 5-phosphate and D-xylulose 5-phosphate (non-oxidative stage): step 2/3. Transaldolase is important for the balance of metabolites in the pentose-phosphate pathway. This Rhizobium meliloti (strain 1021) (Ensifer meliloti) protein is Probable transaldolase.